Reading from the N-terminus, the 124-residue chain is Small ribosomal subunit protein uS12 (124 aa).

3-methylthioaspartic acid is present on Asp-89.

It belongs to the universal ribosomal protein uS12 family. In terms of assembly, part of the 30S ribosomal subunit. Contacts proteins S8 and S17. May interact with IF1 in the 30S initiation complex.

Functionally, with S4 and S5 plays an important role in translational accuracy. In terms of biological role, interacts with and stabilizes bases of the 16S rRNA that are involved in tRNA selection in the A site and with the mRNA backbone. Located at the interface of the 30S and 50S subunits, it traverses the body of the 30S subunit contacting proteins on the other side and probably holding the rRNA structure together. The combined cluster of proteins S8, S12 and S17 appears to hold together the shoulder and platform of the 30S subunit. The sequence is that of Small ribosomal subunit protein uS12 from Histophilus somni (strain 129Pt) (Haemophilus somnus).